The primary structure comprises 401 residues: tRNA(Ile)-lysidine synthase (401 aa).

Position 17–22 (17–22 (SGGPDS)) interacts with ATP.

Belongs to the tRNA(Ile)-lysidine synthase family.

The protein resides in the cytoplasm. The enzyme catalyses cytidine(34) in tRNA(Ile2) + L-lysine + ATP = lysidine(34) in tRNA(Ile2) + AMP + diphosphate + H(+). In terms of biological role, ligates lysine onto the cytidine present at position 34 of the AUA codon-specific tRNA(Ile) that contains the anticodon CAU, in an ATP-dependent manner. Cytidine is converted to lysidine, thus changing the amino acid specificity of the tRNA from methionine to isoleucine. The polypeptide is tRNA(Ile)-lysidine synthase (Mycoplasma mycoides subsp. mycoides SC (strain CCUG 32753 / NCTC 10114 / PG1)).